The following is a 138-amino-acid chain: Phosphoribosyl-AMP cyclohydrolase (138 aa).

Position 84 (Asp-84) interacts with Mg(2+). Cys-85 lines the Zn(2+) pocket. Residues Asp-86 and Asp-88 each coordinate Mg(2+). Positions 102 and 109 each coordinate Zn(2+).

This sequence belongs to the PRA-CH family. In terms of assembly, homodimer. The cofactor is Mg(2+). It depends on Zn(2+) as a cofactor.

It localises to the cytoplasm. It catalyses the reaction 1-(5-phospho-beta-D-ribosyl)-5'-AMP + H2O = 1-(5-phospho-beta-D-ribosyl)-5-[(5-phospho-beta-D-ribosylamino)methylideneamino]imidazole-4-carboxamide. The protein operates within amino-acid biosynthesis; L-histidine biosynthesis; L-histidine from 5-phospho-alpha-D-ribose 1-diphosphate: step 3/9. In terms of biological role, catalyzes the hydrolysis of the adenine ring of phosphoribosyl-AMP. This Burkholderia ambifaria (strain ATCC BAA-244 / DSM 16087 / CCUG 44356 / LMG 19182 / AMMD) (Burkholderia cepacia (strain AMMD)) protein is Phosphoribosyl-AMP cyclohydrolase.